The chain runs to 352 residues: Protein pelota homolog (352 aa).

It belongs to the eukaryotic release factor 1 family. Pelota subfamily. Monomer. It depends on a divalent metal cation as a cofactor.

It localises to the cytoplasm. May function in recognizing stalled ribosomes, interact with stem-loop structures in stalled mRNA molecules, and effect endonucleolytic cleavage of the mRNA. May play a role in the release non-functional ribosomes and degradation of damaged mRNAs. Has endoribonuclease activity. This is Protein pelota homolog from Thermofilum pendens (strain DSM 2475 / Hrk 5).